The sequence spans 347 residues: Protein pelota homolog (347 aa).

The protein belongs to the eukaryotic release factor 1 family. Pelota subfamily. As to quaternary structure, monomer. Requires a divalent metal cation as cofactor.

Its subcellular location is the cytoplasm. Its function is as follows. May function in recognizing stalled ribosomes, interact with stem-loop structures in stalled mRNA molecules, and effect endonucleolytic cleavage of the mRNA. May play a role in the release non-functional ribosomes and degradation of damaged mRNAs. Has endoribonuclease activity. The protein is Protein pelota homolog of Methanococcoides burtonii (strain DSM 6242 / NBRC 107633 / OCM 468 / ACE-M).